The following is a 527-amino-acid chain: EGF domain-specific O-linked N-acetylglucosamine transferase (527 aa).

An N-terminal signal peptide occupies residues 1–17; the sequence is MFMLLVFGALLPEVPLS. Residues 295–297 carry the Required for optimal activity motif; that stretch reads DYD. N-linked (GlcNAc...) asparagine glycosylation is present at Asn354. The short motif at 524–527 is the Prevents secretion from ER element; the sequence is HDEL.

This sequence belongs to the glycosyltransferase 61 family.

It localises to the endoplasmic reticulum lumen. It carries out the reaction L-seryl-[protein] + UDP-N-acetyl-alpha-D-glucosamine = 3-O-(N-acetyl-beta-D-glucosaminyl)-L-seryl-[protein] + UDP + H(+). The enzyme catalyses L-threonyl-[protein] + UDP-N-acetyl-alpha-D-glucosamine = 3-O-(N-acetyl-beta-D-glucosaminyl)-L-threonyl-[protein] + UDP + H(+). Its function is as follows. Catalyzes the transfer of a single N-acetylglucosamine from UDP-GlcNAc to a serine or threonine residue in extracellular proteins resulting in their modification with a beta-linked N-acetylglucosamine (O-GlcNAc). Specifically glycosylates the Thr residue located between the fifth and sixth conserved cysteines of folded EGF-like domains. The chain is EGF domain-specific O-linked N-acetylglucosamine transferase (EOGT) from Bos taurus (Bovine).